We begin with the raw amino-acid sequence, 347 residues long: NADH-ubiquinone oxidoreductase chain 2 (347 aa).

A run of 11 helical transmembrane segments spans residues 3–23, 25–45, 59–79, 96–116, 122–142, 149–169, 178–198, 201–221, 239–259, 274–294, and 326–346; these read PMILLMLLITILSGTSIVMMS, HWFLTWLGFEMNMMAMIPVLM, YFLTQATASMILVLGIIINLI, TLLTIALVMKLGLAPFHFWVP, VSLNSGLILLTWQKIAPLSLL, VNTNILLVMSLLSIMVGGWGG, IMAYSSIAHMGWMIMIMIYNP, SLLNLLIYILMTSSMFMLLMF, IITTTILIILLSLGGLPPLSG, DSVILPAVMAILALLNLFFYM, and MTSLISISIMALPLTPLAMIL.

This sequence belongs to the complex I subunit 2 family. In terms of assembly, core subunit of respiratory chain NADH dehydrogenase (Complex I) which is composed of 45 different subunits. Interacts with TMEM242.

It localises to the mitochondrion inner membrane. The catalysed reaction is a ubiquinone + NADH + 5 H(+)(in) = a ubiquinol + NAD(+) + 4 H(+)(out). In terms of biological role, core subunit of the mitochondrial membrane respiratory chain NADH dehydrogenase (Complex I) which catalyzes electron transfer from NADH through the respiratory chain, using ubiquinone as an electron acceptor. Essential for the catalytic activity and assembly of complex I. This chain is NADH-ubiquinone oxidoreductase chain 2, found in Sylvisorex johnstoni (Johnston's forest shrew).